Reading from the N-terminus, the 138-residue chain is Small ribosomal subunit protein uS11c (138 aa).

The protein belongs to the universal ribosomal protein uS11 family. As to quaternary structure, part of the 30S ribosomal subunit.

The protein resides in the plastid. It is found in the chloroplast. The chain is Small ribosomal subunit protein uS11c from Phalaenopsis aphrodite subsp. formosana (Moth orchid).